Consider the following 536-residue polypeptide: Velvet complex subunit B (536 aa).

The span at 1 to 26 (MIQRTTDPAAGSSTSGPPTNSLSWGS) shows a compositional bias: polar residues. 4 disordered regions span residues 1–27 (MIQR…WGSR), 106–143 (PNAA…AIPF), 157–409 (SAPA…RTLV), and 508–536 (KLPL…EESD). One can recognise a Velvet domain in the interval 25 to 512 (GSRHNGKLYT…NQQNMKLPLR (488 aa)). A compositionally biased stretch (pro residues) spans 114–143 (PPMPAKPRRPTNPPPPSNTHGSPPAPAIPF). Composition is skewed to low complexity over residues 158–170 (APAS…SASA) and 190–265 (PYGP…YPPY). Positions 280–305 (TSNFDHSQPVTSSVDQETNSPVVTTT) are enriched in polar residues. Basic and acidic residues predominate over residues 306–315 (ARDDDQREGE). The span at 328–342 (PSNSGAPSTSPTAST) shows a compositional bias: low complexity. The segment covering 356–399 (EEREGPDGGPDLREPIEPGSTKAREEEDARTGTEKGDPKDKSDA) has biased composition (basic and acidic residues). Residues 400 to 409 (QRATYTRTLV) show a composition bias toward polar residues. Residues 511–525 (LRNRHGSGSKRRRRG) show a composition bias toward basic residues.

The protein belongs to the velvet family. VelB subfamily. Component of the heterotrimeric velvet complex composed of laeA, veA and velB; VeA acting as a bridging protein between laeA and velB. Forms a heterodimeric complex with vosA; the formation of the velB-vosA complex is light-dependent.

The protein localises to the nucleus. The protein resides in the cytoplasm. Component of the velvet transcription factor complex that controls sexual/asexual developmental ratio in response to light, promoting sexual development in the darkness while stimulating asexual sporulation under illumination. The velvet complex acts as a global regulator for secondary metabolite gene expression. Component of the velB-VosA heterodimeric complex that plays a dual role in activating genes associated with spore maturation and repressing certain development-associated genes. The velB-VosA complex binds DNA through the DNA-binding domain of vosA that recognizes an 11-nucleotide consensus sequence 5'-CTGGCCGCGGC-3' consisting of two motifs in the promoters of key developmental regulatory genes. In Schizophyllum commune (strain H4-8 / FGSC 9210) (Split gill fungus), this protein is Velvet complex subunit B.